Consider the following 229-residue polypeptide: Large ribosomal subunit protein uL1 (229 aa).

This sequence belongs to the universal ribosomal protein uL1 family. In terms of assembly, part of the 50S ribosomal subunit.

Its function is as follows. Binds directly to 23S rRNA. The L1 stalk is quite mobile in the ribosome, and is involved in E site tRNA release. In terms of biological role, protein L1 is also a translational repressor protein, it controls the translation of the L11 operon by binding to its mRNA. This is Large ribosomal subunit protein uL1 from Clostridium tetani (strain Massachusetts / E88).